The primary structure comprises 493 residues: Growth-regulating factor 8 (493 aa).

The 36-residue stretch at 149-184 (AFSEAQWHELERQRNIYKYMMASVPVPPELLTPFPK) folds into the QLQ domain. A WRC domain is found at 243-287 (DLEPWRCKRTDGKKWRCSRNVIPDQKYCERHTHKSRPRSRKHVES). 2 consecutive short sequence motifs (bipartite nuclear localization signal) follow at residues 248–258 (RCKRTDGKKWR) and 276–283 (KSRPRSRK). Positions 270–302 (CERHTHKSRPRSRKHVESSHQSSHHNDIRTAKN) are disordered. Basic residues predominate over residues 273–283 (HTHKSRPRSRK).

Belongs to the GRF family. Predominantly expressed in shoot tips and flowers.

It localises to the nucleus. Functionally, transcription activator that plays a role in the regulation of cell expansion in leaf and cotyledons tissues. Component of a network formed by miR396, the GRFs and their interacting factors (GIFs) acting in the regulation of meristem function, at least partially through the control of cell proliferation. This chain is Growth-regulating factor 8 (GRF8), found in Arabidopsis thaliana (Mouse-ear cress).